The sequence spans 858 residues: Respiratory burst oxidase homolog protein D (858 aa).

Basic and acidic residues predominate over residues 1–13; the sequence is MQNPEDHHSDREL. The interval 1–27 is disordered; sequence MQNPEDHHSDRELSSPSNTTKSNDDKN. Topologically, residues 1 to 318 are cytoplasmic; that stretch reads MQNPEDHHSD…KYFLLDNWRR (318 aa). EF-hand-like stretches follow at residues 134–144 and 171–182; these read TATSDSLLPRA and RNITSGCISKEQ. EF-hand domains lie at 194 to 229 and 238 to 273; these read SFDSRLRTFFDMVDKDADGRLTEEEVREIICLSASA and QAAEYAALIMEELDRDQKGYIMLENLEMLLLEAPIQ. 5 residues coordinate Ca(2+): Asp207, Asp209, Asp211, Arg213, and Glu218. A helical transmembrane segment spans residues 319 to 339; that stretch reads VWVLLLWIGVMAGLFAYKYVQ. The Extracellular segment spans residues 340–351; sequence YKNKAAFNVMGH. Residues 352-372 form a helical membrane-spanning segment; it reads CVCVAKGAAEVLKLNMALILL. Residues 357 to 514 form the Ferric oxidoreductase domain; the sequence is KGAAEVLKLN…LFVIVYSLLI (158 aa). Residues 373–397 lie on the Cytoplasmic side of the membrane; it reads PVCRNTITWLRNKTKLGGAVPFDDN. A helical membrane pass occupies residues 398-418; the sequence is INFHKVVAGAIAVGVGIHVLA. Over 419–454 the chain is Extracellular; sequence HMTCDFPRLLNASPEKYKPMEPYFGDQPRNYWHFVK. Residues 455–475 form a helical membrane-spanning segment; that stretch reads GVEGVSGIIMVVLMSIAFTLA. Over 476 to 497 the chain is Cytoplasmic; sequence SQRFRRNKIRLPRPLNKLTGFN. The helical transmembrane segment at 498–518 threads the bilayer; the sequence is AFWYSHHLFVIVYSLLIVHGI. Residues 519 to 675 lie on the Extracellular side of the membrane; that stretch reads ELYLTKEWYK…APAQDYKEYE (157 aa). Residues 548 to 670 form the FAD-binding FR-type domain; the sequence is LRAFRSSVKD…DGPYGAPAQD (123 aa). The chain crosses the membrane as a helical span at residues 676-696; sequence VLLLVGLGIGATPMISIVKDI. Over 697-858 the chain is Cytoplasmic; the sequence is VNNMKEEKYD…TKFDFHKENF (162 aa).

The protein belongs to the RBOH (TC 5.B.1.3) family. In terms of assembly, monomer and homodimer. Phosphorylated by CPK. Expressed in leaves.

Its subcellular location is the membrane. Functionally, calcium-dependent NADPH oxidase that generates superoxide. May be responsible for the oxidative burst in response to pathogen attack in the leaves. In Solanum tuberosum (Potato), this protein is Respiratory burst oxidase homolog protein D (RBOHD).